The primary structure comprises 322 residues: Transcriptional activator protein Pur-alpha (322 aa).

Positions 1–55 (MADRDSGSEQGGAALGSGGSLGHPGSGSGSGGGGGGGGGGGGSGGGGGGAPGGLQ) are disordered. Ala2 bears the N-acetylalanine mark. The span at 9 to 52 (EQGGAALGSGGSLGHPGSGSGSGGGGGGGGGGGGSGGGGGGAPG) shows a compositional bias: gly residues. A PUR repeat I repeat occupies 60–125 (ELASKRVDIQ…DFIEHYAQLG (66 aa)). The stretch at 142-213 (ALKSEFLVRE…KLIDDYGVEE (72 aa)) is one PUR repeat II repeat. Position 182 is a phosphoserine (Ser182). Residues 215–281 (PAELPEGTSL…CKYSEEMKKI (67 aa)) form a PUR repeat III repeat. Low complexity predominate over residues 295-314 (LHQQQQQQQEETAAATLLLQ). The disordered stretch occupies residues 295–322 (LHQQQQQQQEETAAATLLLQGEEEGEED).

This sequence belongs to the PUR DNA-binding protein family. Homodimer, heterodimer with PURB and heterotrimer with PURB and YBX1/Y-box protein 1. Interacts with FMR1; this interaction occurs in association with polyribosome.

It localises to the nucleus. This is a probable transcription activator that specifically binds the purine-rich single strand of the PUR element located upstream of the MYC gene. May play a role in the initiation of DNA replication and in recombination. The polypeptide is Transcriptional activator protein Pur-alpha (PURA) (Homo sapiens (Human)).